We begin with the raw amino-acid sequence, 144 residues long: D-aminoacyl-tRNA deacylase (144 aa).

The Gly-cisPro motif, important for rejection of L-amino acids motif lies at 136–137; the sequence is GP.

It belongs to the DTD family. Homodimer.

The protein resides in the cytoplasm. The catalysed reaction is glycyl-tRNA(Ala) + H2O = tRNA(Ala) + glycine + H(+). It catalyses the reaction a D-aminoacyl-tRNA + H2O = a tRNA + a D-alpha-amino acid + H(+). An aminoacyl-tRNA editing enzyme that deacylates mischarged D-aminoacyl-tRNAs. Also deacylates mischarged glycyl-tRNA(Ala), protecting cells against glycine mischarging by AlaRS. Acts via tRNA-based rather than protein-based catalysis; rejects L-amino acids rather than detecting D-amino acids in the active site. By recycling D-aminoacyl-tRNA to D-amino acids and free tRNA molecules, this enzyme counteracts the toxicity associated with the formation of D-aminoacyl-tRNA entities in vivo and helps enforce protein L-homochirality. The polypeptide is D-aminoacyl-tRNA deacylase (Vibrio cholerae serotype O1 (strain ATCC 39541 / Classical Ogawa 395 / O395)).